Consider the following 309-residue polypeptide: Taste receptor type 2 member 31 (309 aa).

Topologically, residues 1–2 are extracellular; that stretch reads MI. The helical transmembrane segment at 3 to 23 threads the bilayer; sequence TFLPTIFSILVVVIFVIGNFG. Residues 24–55 are Cytoplasmic-facing; the sequence is NGFIALVNSIEWVKRQKISFADQILTALAVSR. The helical transmembrane segment at 56–76 threads the bilayer; the sequence is VGLLWALLLNWYSTVFNPAFY. At 77–100 the chain is on the extracellular side; that stretch reads SVGVRTTVYDVWTVTGHFSNWLAT. Residues 101–121 form a helical membrane-spanning segment; that stretch reads SLSIFYLLKIANFSNLIFLHL. The Cytoplasmic portion of the chain corresponds to 122-126; it reads KRRVK. A helical membrane pass occupies residues 127 to 147; that stretch reads SVILVMLLGPLLFLACQLFVI. The Extracellular segment spans residues 148 to 181; it reads NMKEILRTKEYEGNMTWKIKLRSAMYLSDATITT. Asn-161 carries N-linked (GlcNAc...) asparagine glycosylation. A helical transmembrane segment spans residues 182–202; that stretch reads LANLVPFTLTLLSFLLLICSL. At 203 to 229 the chain is on the cytoplasmic side; that stretch reads CKHLNKMQLHGKGSQDPSTKVHIKVLQ. Residues 230-250 traverse the membrane as a helical segment; that stretch reads TVISFLLLCAIYFLSIMISVW. The Extracellular portion of the chain corresponds to 251 to 259; sequence SFGSLENKP. Residues 260–280 traverse the membrane as a helical segment; the sequence is VFMFCKAIRFSYPSIHPFILI. Topologically, residues 281–309 are cytoplasmic; it reads WGNKKLKQTFLSVLRQVRYWVKGEKPSSP.

The protein belongs to the G-protein coupled receptor T2R family.

The protein localises to the membrane. Receptor that may play a role in the perception of bitterness and is gustducin-linked. May play a role in sensing the chemical composition of the gastrointestinal content. The activity of this receptor may stimulate alpha gustducin, mediate PLC-beta-2 activation and lead to the gating of TRPM5. This Pongo pygmaeus (Bornean orangutan) protein is Taste receptor type 2 member 31 (TAS2R31).